The primary structure comprises 161 residues: Regulator of ribonuclease activity A (161 aa).

Belongs to the RraA family. As to quaternary structure, homotrimer. Binds to both RNA-binding sites in the C-terminal region of Rne and to RhlB.

Its subcellular location is the cytoplasm. Its function is as follows. Globally modulates RNA abundance by binding to RNase E (Rne) and regulating its endonucleolytic activity. Can modulate Rne action in a substrate-dependent manner by altering the composition of the degradosome. Modulates RNA-binding and helicase activities of the degradosome. This Idiomarina loihiensis (strain ATCC BAA-735 / DSM 15497 / L2-TR) protein is Regulator of ribonuclease activity A.